A 62-amino-acid chain; its full sequence is Large ribosomal subunit protein bL28 (62 aa).

The protein belongs to the bacterial ribosomal protein bL28 family.

In Streptococcus gordonii (strain Challis / ATCC 35105 / BCRC 15272 / CH1 / DL1 / V288), this protein is Large ribosomal subunit protein bL28.